A 245-amino-acid chain; its full sequence is Endonuclease III (245 aa).

The HhH domain occupies 119-138; the sequence is MVDLFTLPGVGRKTANVILG. 4 residues coordinate [4Fe-4S] cluster: cysteine 198, cysteine 205, cysteine 208, and cysteine 214.

The protein belongs to the Nth/MutY family. Requires [4Fe-4S] cluster as cofactor.

The enzyme catalyses 2'-deoxyribonucleotide-(2'-deoxyribose 5'-phosphate)-2'-deoxyribonucleotide-DNA = a 3'-end 2'-deoxyribonucleotide-(2,3-dehydro-2,3-deoxyribose 5'-phosphate)-DNA + a 5'-end 5'-phospho-2'-deoxyribonucleoside-DNA + H(+). DNA repair enzyme that has both DNA N-glycosylase activity and AP-lyase activity. The DNA N-glycosylase activity releases various damaged pyrimidines from DNA by cleaving the N-glycosidic bond, leaving an AP (apurinic/apyrimidinic) site. The AP-lyase activity cleaves the phosphodiester bond 3' to the AP site by a beta-elimination, leaving a 3'-terminal unsaturated sugar and a product with a terminal 5'-phosphate. In Mycobacterium leprae (strain TN), this protein is Endonuclease III.